The chain runs to 157 residues: Transcription elongation factor GreA (157 aa).

Residues 1 to 75 adopt a coiled-coil conformation; it reads MSKEIILTQE…VETLINRAKV (75 aa).

The protein belongs to the GreA/GreB family.

Functionally, necessary for efficient RNA polymerase transcription elongation past template-encoded arresting sites. The arresting sites in DNA have the property of trapping a certain fraction of elongating RNA polymerases that pass through, resulting in locked ternary complexes. Cleavage of the nascent transcript by cleavage factors such as GreA or GreB allows the resumption of elongation from the new 3'terminus. GreA releases sequences of 2 to 3 nucleotides. The sequence is that of Transcription elongation factor GreA from Mycoplasma mycoides subsp. mycoides SC (strain CCUG 32753 / NCTC 10114 / PG1).